The sequence spans 449 residues: Bifunctional protein GlmU (449 aa).

The pyrophosphorylase stretch occupies residues 1 to 229; sequence MKLSAVILAA…EEDIYGINDR (229 aa). UDP-N-acetyl-alpha-D-glucosamine-binding positions include 8–11, Lys22, Gln73, and 78–79; these read LAAG and GT. Asp102 is a Mg(2+) binding site. UDP-N-acetyl-alpha-D-glucosamine contacts are provided by Gly139, Glu154, Asn169, and Asn227. Asn227 lines the Mg(2+) pocket. The tract at residues 230–250 is linker; it reads VQLAQAENILRQRKNRELMLS. The N-acetyltransferase stretch occupies residues 251–449; it reads GVSLMDPAST…AGQKHLPRKG (199 aa). The UDP-N-acetyl-alpha-D-glucosamine site is built by Arg332 and Lys350. Catalysis depends on His362, which acts as the Proton acceptor. UDP-N-acetyl-alpha-D-glucosamine is bound by residues Tyr365 and Asn376. Acetyl-CoA is bound by residues Ala379, 385–386, Ser404, Ala422, and Arg439; that span reads NY.

In the N-terminal section; belongs to the N-acetylglucosamine-1-phosphate uridyltransferase family. The protein in the C-terminal section; belongs to the transferase hexapeptide repeat family. As to quaternary structure, homotrimer. Mg(2+) serves as cofactor.

Its subcellular location is the cytoplasm. It carries out the reaction alpha-D-glucosamine 1-phosphate + acetyl-CoA = N-acetyl-alpha-D-glucosamine 1-phosphate + CoA + H(+). It catalyses the reaction N-acetyl-alpha-D-glucosamine 1-phosphate + UTP + H(+) = UDP-N-acetyl-alpha-D-glucosamine + diphosphate. The protein operates within nucleotide-sugar biosynthesis; UDP-N-acetyl-alpha-D-glucosamine biosynthesis; N-acetyl-alpha-D-glucosamine 1-phosphate from alpha-D-glucosamine 6-phosphate (route II): step 2/2. It functions in the pathway nucleotide-sugar biosynthesis; UDP-N-acetyl-alpha-D-glucosamine biosynthesis; UDP-N-acetyl-alpha-D-glucosamine from N-acetyl-alpha-D-glucosamine 1-phosphate: step 1/1. Its pathway is bacterial outer membrane biogenesis; LPS lipid A biosynthesis. Its function is as follows. Catalyzes the last two sequential reactions in the de novo biosynthetic pathway for UDP-N-acetylglucosamine (UDP-GlcNAc). The C-terminal domain catalyzes the transfer of acetyl group from acetyl coenzyme A to glucosamine-1-phosphate (GlcN-1-P) to produce N-acetylglucosamine-1-phosphate (GlcNAc-1-P), which is converted into UDP-GlcNAc by the transfer of uridine 5-monophosphate (from uridine 5-triphosphate), a reaction catalyzed by the N-terminal domain. The protein is Bifunctional protein GlmU of Syntrophomonas wolfei subsp. wolfei (strain DSM 2245B / Goettingen).